We begin with the raw amino-acid sequence, 260 residues long: Small ribosomal subunit protein uS2 (260 aa).

Belongs to the universal ribosomal protein uS2 family.

This is Small ribosomal subunit protein uS2 (rpsB) from Borreliella burgdorferi (strain ATCC 35210 / DSM 4680 / CIP 102532 / B31) (Borrelia burgdorferi).